Consider the following 636-residue polypeptide: 3-phosphoinositide-dependent protein kinase 1 (636 aa).

Low complexity-rich tracts occupy residues 1-20 (MEDL…NNDT) and 27-37 (APTTLNLTPTA). The interval 1-45 (MEDLTPTNTSLDTTTTNNDTTSDREAAPTTLNLTPTASESENSLS) is disordered. Residues 69-364 (FMFLQSMGEG…SQELMAHKFF (296 aa)) enclose the Protein kinase domain. ATP-binding positions include 79–81 (AYS) and Lys-98. The segment at 100-149 (LQKSYLNRHQKMDAIIREKNILTYLSQECGGHPFVTQLYTHFHDQARIYF) is PIF-pocket. Residues 152-154 (GLV) and Asp-158 contribute to the ATP site. Residue Asp-197 is the Proton acceptor of the active site. ATP contacts are provided by Asp-201 and Asp-215. 2 disordered regions span residues 233–264 (TDAN…EENT) and 593–636 (KKSR…KKSP). Residues 550-631 (DLEKKADEWC…QVSKKLSMQM (82 aa)) are a coiled coil. Over residues 597–624 (KEMMREQKALRRKQEKEEKKALKAEQVS) the composition is skewed to basic and acidic residues.

It belongs to the protein kinase superfamily. AGC Ser/Thr protein kinase family. PDPK1 subfamily. In terms of assembly, interacts directly with sgk-1, akt-1 and akt-2.

The protein resides in the cytoplasm. The catalysed reaction is L-seryl-[protein] + ATP = O-phospho-L-seryl-[protein] + ADP + H(+). The enzyme catalyses L-threonyl-[protein] + ATP = O-phospho-L-threonyl-[protein] + ADP + H(+). Involved in the daf-2/insulin receptor-like transduction pathway, which controls longevity and prevents developmental arrest at the dauer stage. Phosphorylates and activates sgk-1, akt-1 and akt-2. This Caenorhabditis elegans protein is 3-phosphoinositide-dependent protein kinase 1.